Consider the following 260-residue polypeptide: Global transcriptional regulator CodY (260 aa).

Residues 1 to 159 (MPNLLEKTRK…SSTVVGIQLL (159 aa)) are GAF domain. The segment at residues 207 to 226 (ASVIADRIGITRSVIVNALR) is a DNA-binding region (H-T-H motif).

This sequence belongs to the CodY family.

It is found in the cytoplasm. Its function is as follows. DNA-binding global transcriptional regulator which is involved in the adaptive response to starvation and acts by directly or indirectly controlling the expression of numerous genes in response to nutrient availability. During rapid exponential growth, CodY is highly active and represses genes whose products allow adaptation to nutrient depletion. In Streptococcus pyogenes serotype M1, this protein is Global transcriptional regulator CodY.